We begin with the raw amino-acid sequence, 140 residues long: Small ribosomal subunit protein uS12 (140 aa).

The segment at 33–55 is disordered; the sequence is KEQTNVSSPQKRGVCTRVGTMTP.

The protein belongs to the universal ribosomal protein uS12 family. As to quaternary structure, part of the 30S ribosomal subunit. Contacts proteins S8 and S17. May interact with IF1 in the 30S initiation complex.

Its function is as follows. With S4 and S5 plays an important role in translational accuracy. In terms of biological role, interacts with and stabilizes bases of the 16S rRNA that are involved in tRNA selection in the A site and with the mRNA backbone. Located at the interface of the 30S and 50S subunits, it traverses the body of the 30S subunit contacting proteins on the other side and probably holding the rRNA structure together. The combined cluster of proteins S8, S12 and S17 appears to hold together the shoulder and platform of the 30S subunit. This is Small ribosomal subunit protein uS12 from Geobacillus kaustophilus (strain HTA426).